We begin with the raw amino-acid sequence, 246 residues long: uncharacterized protein (246 aa).

The protein belongs to the IIV-6 170L family.

This is an uncharacterized protein from Acheta domesticus (House cricket).